Here is an 87-residue protein sequence, read N- to C-terminus: Putative membrane protein insertion efficiency factor (87 aa).

It belongs to the UPF0161 family.

The protein localises to the cell membrane. In terms of biological role, could be involved in insertion of integral membrane proteins into the membrane. The sequence is that of Putative membrane protein insertion efficiency factor from Streptococcus pyogenes serotype M12 (strain MGAS2096).